A 197-amino-acid chain; its full sequence is ATP-dependent Clp protease proteolytic subunit (197 aa).

The active-site Nucleophile is S98. The active site involves H123.

This sequence belongs to the peptidase S14 family. In terms of assembly, fourteen ClpP subunits assemble into 2 heptameric rings which stack back to back to give a disk-like structure with a central cavity, resembling the structure of eukaryotic proteasomes.

The protein localises to the cytoplasm. It catalyses the reaction Hydrolysis of proteins to small peptides in the presence of ATP and magnesium. alpha-casein is the usual test substrate. In the absence of ATP, only oligopeptides shorter than five residues are hydrolyzed (such as succinyl-Leu-Tyr-|-NHMec, and Leu-Tyr-Leu-|-Tyr-Trp, in which cleavage of the -Tyr-|-Leu- and -Tyr-|-Trp bonds also occurs).. Cleaves peptides in various proteins in a process that requires ATP hydrolysis. Has a chymotrypsin-like activity. Plays a major role in the degradation of misfolded proteins. The sequence is that of ATP-dependent Clp protease proteolytic subunit from Limosilactobacillus reuteri (strain DSM 20016) (Lactobacillus reuteri).